A 676-amino-acid chain; its full sequence is Urocanate hydratase (676 aa).

A disordered region spans residues 15–35; the sequence is PLPENRGRQAGVPHAPVRTPS. NAD(+) contacts are provided by residues 126 to 127, Gln-204, 251 to 253, Glu-271, 317 to 318, 343 to 347, 354 to 355, Tyr-403, and Gly-594; these read GG, GMS, NV, QTSCH, and YY.

The protein belongs to the urocanase family. The cofactor is NAD(+).

The enzyme catalyses 4-imidazolone-5-propanoate = trans-urocanate + H2O. Its pathway is amino-acid degradation; L-histidine degradation into L-glutamate; N-formimidoyl-L-glutamate from L-histidine: step 2/3. The protein is Urocanate hydratase (UROC1) of Homo sapiens (Human).